A 160-amino-acid polypeptide reads, in one-letter code: 6,7-dimethyl-8-ribityllumazine synthase (160 aa).

Residues tryptophan 27, 59-61 (AIE), and 81-83 (VVI) contribute to the 5-amino-6-(D-ribitylamino)uracil site. 86–87 (QT) is a (2S)-2-hydroxy-3-oxobutyl phosphate binding site. Histidine 89 (proton donor) is an active-site residue. Asparagine 114 provides a ligand contact to 5-amino-6-(D-ribitylamino)uracil. Arginine 128 is a (2S)-2-hydroxy-3-oxobutyl phosphate binding site.

Belongs to the DMRL synthase family. In terms of assembly, homopentamer.

The catalysed reaction is (2S)-2-hydroxy-3-oxobutyl phosphate + 5-amino-6-(D-ribitylamino)uracil = 6,7-dimethyl-8-(1-D-ribityl)lumazine + phosphate + 2 H2O + H(+). It functions in the pathway cofactor biosynthesis; riboflavin biosynthesis; riboflavin from 2-hydroxy-3-oxobutyl phosphate and 5-amino-6-(D-ribitylamino)uracil: step 1/2. Functionally, catalyzes the formation of 6,7-dimethyl-8-ribityllumazine by condensation of 5-amino-6-(D-ribitylamino)uracil with 3,4-dihydroxy-2-butanone 4-phosphate. This is the penultimate step in the biosynthesis of riboflavin. The sequence is that of 6,7-dimethyl-8-ribityllumazine synthase from Mycolicibacterium paratuberculosis (strain ATCC BAA-968 / K-10) (Mycobacterium paratuberculosis).